Reading from the N-terminus, the 342-residue chain is Isopentenyl-diphosphate delta-isomerase (342 aa).

12-13 contributes to the substrate binding site; that stretch reads RK. Residues 71–73, Ser101, and Asn129 each bind FMN; that span reads AMT. Residue 101–103 coordinates substrate; sequence SQR. Residue Gln163 participates in substrate binding. Position 164 (Glu164) interacts with Mg(2+). FMN is bound by residues Lys195, Thr225, 272–274, and 293–294; these read GIR and AR.

Belongs to the IPP isomerase type 2 family. As to quaternary structure, homooctamer. Dimer of tetramers. The cofactor is FMN. NADPH is required as a cofactor. Mg(2+) serves as cofactor.

Its subcellular location is the cytoplasm. The catalysed reaction is isopentenyl diphosphate = dimethylallyl diphosphate. In terms of biological role, involved in the biosynthesis of isoprenoids. Catalyzes the 1,3-allylic rearrangement of the homoallylic substrate isopentenyl (IPP) to its allylic isomer, dimethylallyl diphosphate (DMAPP). This chain is Isopentenyl-diphosphate delta-isomerase, found in Mycolicibacterium vanbaalenii (strain DSM 7251 / JCM 13017 / BCRC 16820 / KCTC 9966 / NRRL B-24157 / PYR-1) (Mycobacterium vanbaalenii).